A 315-amino-acid chain; its full sequence is Jacalin-related lectin 10 (315 aa).

The signal sequence occupies residues 1–23 (MVIIYIFLFLSSAIIDSTGLAKA). 2 consecutive Jacalin-type lectin domains span residues 24-165 (QKLD…YLTT) and 168-312 (PTKS…YFSP).

Belongs to the jacalin lectin family.

This Arabidopsis thaliana (Mouse-ear cress) protein is Jacalin-related lectin 10 (JAL10).